Here is a 182-residue protein sequence, read N- to C-terminus: Adenine phosphoribosyltransferase (182 aa).

It belongs to the purine/pyrimidine phosphoribosyltransferase family. Homodimer.

Its subcellular location is the cytoplasm. The catalysed reaction is AMP + diphosphate = 5-phospho-alpha-D-ribose 1-diphosphate + adenine. Its pathway is purine metabolism; AMP biosynthesis via salvage pathway; AMP from adenine: step 1/1. In terms of biological role, catalyzes a salvage reaction resulting in the formation of AMP, that is energically less costly than de novo synthesis. This chain is Adenine phosphoribosyltransferase, found in Renibacterium salmoninarum (strain ATCC 33209 / DSM 20767 / JCM 11484 / NBRC 15589 / NCIMB 2235).